A 156-amino-acid chain; its full sequence is MRVSILAVGRLRTGPEKSLIDDYLTRFDRTGRALGLGPARVVEVEDKKNAGMGAEAALLRKALPAGAVLCTLDERGKQLSSPDFADRMAGWRDTGRQDLALVIGGADGIDPSLRAEADFSISFGAMVWPHMLVRVMLAEQLYRAATILAGSPYHRV.

Residues Leu-72, Gly-104, and 123–128 contribute to the S-adenosyl-L-methionine site; that span reads FGAMVW.

Belongs to the RNA methyltransferase RlmH family. As to quaternary structure, homodimer.

Its subcellular location is the cytoplasm. It carries out the reaction pseudouridine(1915) in 23S rRNA + S-adenosyl-L-methionine = N(3)-methylpseudouridine(1915) in 23S rRNA + S-adenosyl-L-homocysteine + H(+). Functionally, specifically methylates the pseudouridine at position 1915 (m3Psi1915) in 23S rRNA. This is Ribosomal RNA large subunit methyltransferase H from Ruegeria pomeroyi (strain ATCC 700808 / DSM 15171 / DSS-3) (Silicibacter pomeroyi).